A 649-amino-acid polypeptide reads, in one-letter code: FAS-associated factor 1 (649 aa).

The 57-residue stretch at 1–57 folds into the UBA domain; the sequence is MASNMDREMILADFQACTGIENIDEAITLLEQNNWDLVAAINGVIPQENGILQSDFG. Disordered regions lie at residues 56–84 and 266–290; these read FGGE…SAFR and RRTS…VSDS. Low complexity predominate over residues 68-82; that stretch reads PASHPAPASTPSSSA. Position 319 is a phosphoserine (Ser-319). The UBX domain occupies 568–645; that stretch reads NAEPVSKLRI…NLFPQETLFL (78 aa). Phosphothreonine is present on Thr-579. At Ser-581 the chain carries Phosphoserine.

Interacts with CDT1 and ATPase VCP/p97. Interacts (via UBA domain) with FAS (via death domain). Interacts (via UBA domain) with NLRP12 (via DAPIN/PYRIN domain).

Its subcellular location is the nucleus. In terms of biological role, ubiquitin-binding protein. Required for the progression of DNA replication forks by targeting DNA replication licensing factor CDT1 for degradation. Potentiates but cannot initiate FAS-induced apoptosis. This Mus musculus (Mouse) protein is FAS-associated factor 1 (Faf1).